The sequence spans 273 residues: MLKTSEAAADVLKPVLVFDSGIGGLTVLREARVLMPERGFIYVADDAGFPYGGWEEEALKTRILSLFETLLQDYSPEVCIIACNTAFTLAGADLRARFPDMTFVGTVPAIKPAAERTRSGLVSVLATPGTVKRAYTRDLIQSFATQCHVRLVGSENLARMAESWIRGEPVSDEAVLAEIEPCFIDSDGKRTDIVVLACTHYPFMANVFRRLAPWPVDWLDPAEAIARRARHLVPLPQDAEHPDGFDFAVFTSGKPDFATRRLMQGFGLSVSSN.

Residues 19-20 (DS) and 51-52 (YG) each bind substrate. The active-site Proton donor/acceptor is the cysteine 83. Substrate is bound at residue 84–85 (NT). Catalysis depends on cysteine 198, which acts as the Proton donor/acceptor. 199 to 200 (TH) contributes to the substrate binding site.

The protein belongs to the aspartate/glutamate racemases family.

It catalyses the reaction L-glutamate = D-glutamate. The protein operates within cell wall biogenesis; peptidoglycan biosynthesis. Functionally, provides the (R)-glutamate required for cell wall biosynthesis. This Agrobacterium fabrum (strain C58 / ATCC 33970) (Agrobacterium tumefaciens (strain C58)) protein is Glutamate racemase.